Consider the following 2514-residue polypeptide: Highly reducing polyketide synthase sphB (2514 aa).

The Ketosynthase family 3 (KS3) domain maps to Gln-66 to Ser-486. Residues Cys-238, His-374, and His-409 each act as for beta-ketoacyl synthase activity in the active site. One can recognise a Malonyl-CoA:ACP transacylase (MAT) domain in the interval Met-580 to Val-904. The tract at residues His-950–Pro-1079 is N-terminal hotdog fold. Positions His-950–Ala-1240 constitute a PKS/mFAS DH domain. His-982 serves as the catalytic Proton acceptor; for dehydratase activity. A C-terminal hotdog fold region spans residues Pro-1089–Ala-1240. Asp-1150 (proton donor; for dehydratase activity) is an active-site residue. The segment at Trp-1319–Val-1578 is methyltransferase (CMet) domain. Residues Gly-1779–Val-2092 form the Enoyl reductase (ER) domain. The 178-residue stretch at Ala-2120–Glu-2297 folds into the Ketoreductase (KR) domain. One can recognise a Carrier domain in the interval Glu-2427–Val-2504. The residue at position 2464 (Ser-2464) is an O-(pantetheine 4'-phosphoryl)serine.

Pantetheine 4'-phosphate serves as cofactor.

The catalysed reaction is holo-[ACP] + 8 malonyl-CoA + acetyl-CoA + 5 AH2 + 8 NADPH + 16 H(+) = (3R)-hydroxyoctadeca-4,10-dienoyl-[ACP] + 5 A + 8 CO2 + 8 NADP(+) + 9 CoA + 7 H2O. Its pathway is secondary metabolite biosynthesis. Highly reducing polyketide synthase; part of the gene cluster that mediates the biosynthesis of sphingofungins, bioactive molecules acting as sphingolipid inhibitors via inhibiting serine palmitoyl transferase (SPT). Within the pathway, sphB catalyzes the first step of sphingofungin biosynthesis by condensing 8 units of malonyl-CoA with one starter unit of acetyl-CoA, leading to an C18 polyketide precursor 3-hydroxyoctadeca-4,10-dienoyl-ACP containing one delta-6 desaturation and one delta-12 desaturation. The PKS sphB does not contain any putative thioesterase domain for releasing the nascent polyketide chain and it has been suggested that aminoacyl transferases can facilitate the polyketide chain release. The aminoacyl transferase sphA uses the sphB product to produce 3-keto-presphingofungin by adding an aminomalonate molecule. SphF then reduces the C-3 ketone of 3-keto-presphingofungin which leads to presphingofungin. The cytochrome P450 monooxygenase sphH converts presphingofungin into sphingofungin B1 which is further converted to sphingofungin B by the dioxygenase sphC. SphC is also able to convert presphingofungin into sphingofungin B2. The acetyltransferase sphE acetylates sphingofungin B to produce sphingofungin C, but can also convert sphingofungin B1 into sphingofungin C1 and sphingofungin B2 into sphingofungin C2. Finally, sphingofungin C can be spontaneously converted into sphingofungin D. The chain is Highly reducing polyketide synthase sphB from Aspergillus fumigatus (strain CBS 144.89 / FGSC A1163 / CEA10) (Neosartorya fumigata).